The following is a 383-amino-acid chain: Dual-specificity RNA methyltransferase RlmN (383 aa).

Glu-93 acts as the Proton acceptor in catalysis. In terms of domain architecture, Radical SAM core spans 99 to 339 (EETRGTLCVS…TTIRKTRGDD (241 aa)). A disulfide bridge connects residues Cys-106 and Cys-344. Positions 113, 117, and 120 each coordinate [4Fe-4S] cluster. Residues 170 to 171 (GE), Ser-202, 224 to 226 (SLH), and Asn-301 contribute to the S-adenosyl-L-methionine site. The S-methylcysteine intermediate role is filled by Cys-344.

The protein belongs to the radical SAM superfamily. RlmN family. It depends on [4Fe-4S] cluster as a cofactor.

The protein localises to the cytoplasm. The catalysed reaction is adenosine(2503) in 23S rRNA + 2 reduced [2Fe-2S]-[ferredoxin] + 2 S-adenosyl-L-methionine = 2-methyladenosine(2503) in 23S rRNA + 5'-deoxyadenosine + L-methionine + 2 oxidized [2Fe-2S]-[ferredoxin] + S-adenosyl-L-homocysteine. It carries out the reaction adenosine(37) in tRNA + 2 reduced [2Fe-2S]-[ferredoxin] + 2 S-adenosyl-L-methionine = 2-methyladenosine(37) in tRNA + 5'-deoxyadenosine + L-methionine + 2 oxidized [2Fe-2S]-[ferredoxin] + S-adenosyl-L-homocysteine. Specifically methylates position 2 of adenine 2503 in 23S rRNA and position 2 of adenine 37 in tRNAs. m2A2503 modification seems to play a crucial role in the proofreading step occurring at the peptidyl transferase center and thus would serve to optimize ribosomal fidelity. This chain is Dual-specificity RNA methyltransferase RlmN, found in Ralstonia nicotianae (strain ATCC BAA-1114 / GMI1000) (Ralstonia solanacearum).